A 118-amino-acid chain; its full sequence is Small ribosomal subunit protein bS6 (118 aa).

It belongs to the bacterial ribosomal protein bS6 family.

Its function is as follows. Binds together with bS18 to 16S ribosomal RNA. This chain is Small ribosomal subunit protein bS6, found in Saccharopolyspora erythraea (strain ATCC 11635 / DSM 40517 / JCM 4748 / NBRC 13426 / NCIMB 8594 / NRRL 2338).